We begin with the raw amino-acid sequence, 1213 residues long: tRNA wybutosine-synthesizing protein 4 (1213 aa).

Composition is skewed to low complexity over residues 1 to 13 and 39 to 52; these read METT…PATT and ATTT…TTPT. Positions 1 to 76 are disordered; it reads METTEEVVAP…DDQVMGTNNS (76 aa). The segment covering 53–67 has biased composition (basic and acidic residues); it reads HNEHASAKDPRKAQD. S-adenosyl-L-methionine contacts are provided by Arg-117, Gly-148, and Asp-180. Positions 215–248 are enriched in low complexity; it reads STPAATTTAAATTTTTTELKTTAATASSTSTEAP. Positions 215 to 272 are disordered; it reads STPAATTTAAATTTTTTELKTTAATASSTSTEAPQKPKKSPKPKDKSKAARAPAPTTA. S-adenosyl-L-methionine contacts are provided by residues 289-290 and Glu-318; that span reads DL. The segment at 879 to 900 is disordered; that stretch reads EPRSLPLRNQAPNGAEGNANGS. Residues 1006-1166 enclose the JmjC domain; the sequence is PTEKPAVLSD…YAAGKDVYGN (161 aa).

It belongs to the methyltransferase superfamily. LCMT family.

It catalyses the reaction 7-[(3S)-3-amino-3-carboxypropyl]wyosine(37) in tRNA(Phe) + S-adenosyl-L-methionine = 7-[(3S)-(3-amino-3-methoxycarbonyl)propyl]wyosine(37) in tRNA(Phe) + S-adenosyl-L-homocysteine. It carries out the reaction 7-[(3S)-(3-amino-3-methoxycarbonyl)propyl]wyosine(37) in tRNA(Phe) + S-adenosyl-L-methionine + CO2 = wybutosine(37) in tRNA(Phe) + S-adenosyl-L-homocysteine + 2 H(+). Its pathway is tRNA modification; wybutosine-tRNA(Phe) biosynthesis. Probable S-adenosyl-L-methionine-dependent methyltransferase that acts as a component of the wybutosine biosynthesis pathway. Wybutosine is a hyper modified guanosine with a tricyclic base found at the 3'-position adjacent to the anticodon of eukaryotic phenylalanine tRNA. May methylate the carboxyl group of leucine residues to form alpha-leucine ester residues. The polypeptide is tRNA wybutosine-synthesizing protein 4 (lcm-2) (Neurospora crassa (strain ATCC 24698 / 74-OR23-1A / CBS 708.71 / DSM 1257 / FGSC 987)).